We begin with the raw amino-acid sequence, 636 residues long: Eisosome protein sle1 (636 aa).

Residues 1–297 (MSHASKNYNA…HVIIYENKEG (297 aa)) are required for targeting the protein to eisosomes. Disordered stretches follow at residues 111 to 205 (ANYM…SPAN), 222 to 284 (YSPS…VPPV), 313 to 387 (DPSG…TQHF), 400 to 451 (QYYQ…QPSL), 467 to 550 (DITP…VNNA), and 572 to 604 (PSNHAYSEGRSYTFTGGQPPSVPTMPYGSRFAN). Composition is skewed to polar residues over residues 131-159 (PSQQVRPSTSRSPSYASYNSEEVNFQSYQ), 166-178 (RTSQMYMPDNNYS), 188-204 (RRSSSYMVPANSRGSPA), 237-255 (SYNNVQRSSTVRNNTTQKS), and 315-354 (SGSNQASLRSTSTIHYTPSSKRISVIPPNTSNIGSRVVSR). The span at 355-383 (SGQNNNQPAQPGQYNQQSQPVQSYQSGQS) shows a compositional bias: low complexity. 2 stretches are compositionally biased toward polar residues: residues 400 to 412 (QYYQPSSPVQPVQ) and 422 to 439 (PVQSTQYYQPSSPVQPVQ). The span at 471–484 (TASSTTANNAYASA) shows a compositional bias: low complexity. Residues 503-512 (SFERERDSGR) show a composition bias toward basic and acidic residues. Positions 572–589 (PSNHAYSEGRSYTFTGGQ) are enriched in polar residues.

In terms of assembly, component of eisosomes, large cytoplasmic protein assemblies that localize to specialized domains termed MCCs on the plasma membrane.

It is found in the cytoplasm. It localises to the cell cortex. Its subcellular location is the cell tip. In terms of biological role, important for the biogenesis of filamentous eisosomes, large cytoplasmic protein assemblies that localize to specialized domains on the plasma membrane to cluster specific proteins at sites of membrane invaginations. The polypeptide is Eisosome protein sle1 (sle1) (Schizosaccharomyces pombe (strain 972 / ATCC 24843) (Fission yeast)).